The sequence spans 216 residues: Kynurenine formamidase (216 aa).

Residue Phe-21 coordinates substrate. 3 residues coordinate Zn(2+): His-51, His-55, and Asp-57. The active-site Proton donor/acceptor is His-61. His-167 and Glu-179 together coordinate Zn(2+).

The protein belongs to the Cyclase 1 superfamily. KynB family. Homodimer. Zn(2+) serves as cofactor.

The catalysed reaction is N-formyl-L-kynurenine + H2O = L-kynurenine + formate + H(+). It functions in the pathway amino-acid degradation; L-tryptophan degradation via kynurenine pathway; L-kynurenine from L-tryptophan: step 2/2. Catalyzes the hydrolysis of N-formyl-L-kynurenine to L-kynurenine, the second step in the kynurenine pathway of tryptophan degradation. This chain is Kynurenine formamidase, found in Paracidovorax citrulli (strain AAC00-1) (Acidovorax citrulli).